We begin with the raw amino-acid sequence, 589 residues long: Cytochrome P450 monooxygenase TRI13 (589 aa).

The first 21 residues, 1-21 (MFLSLCLMVLALYLLYKWALP), serve as a signal peptide directing secretion. Asn-52, Asn-219, Asn-243, and Asn-366 each carry an N-linked (GlcNAc...) asparagine glycan. Cys-531 provides a ligand contact to heme.

It belongs to the cytochrome P450 family. Heme is required as a cofactor.

It participates in sesquiterpene biosynthesis; trichothecene biosynthesis. Functionally, cytochrome P450 monooxygenase; part of the core gene cluster that mediates the biosynthesis of trichothecenes, a very large family of chemically related bicyclic sesquiterpene compounds acting as mycotoxins, including T2-toxin. The biosynthesis of trichothecenes begins with the cyclization of farnesyl diphosphate to trichodiene and is catalyzed by the trichodiene synthase TRI5. Trichodiene undergoes a series of oxygenations catalyzed by the cytochrome P450 monooxygenase TRI4. TRI4 controls the addition of four oxygens at C-2, C-3, C-11, and the C-12, C-13-epoxide to form the intermediate isotrichotriol. Isotrichotriol then undergoes a non-enzymatic isomerization and cyclization to form isotrichodermol. During this process, the oxygen at the C-2 position becomes the pyran ring oxygen and the hydroxyl group at C-11 is lost. More complex type A trichothecenes are built by modifying isotrichodermol through a series of paired hydroxylation and acetylation or acylation steps. Isotrichodermol is converted to isotrichodermin by the acetyltransferase TRI101. TRI101 encodes a C-3 transacetylase that acts as a self-protection or resistance factor during biosynthesis and that the presence of a free C-3 hydroxyl group is a key component of Fusarium trichothecene phytotoxicity. A second hydroxyl group is added to C-15 by the trichothecene C-15 hydroxylase TRI11, producing 15-decalonectrin, which is then acetylated by TRI3, producing calonectrin. A third hydroxyl group is added at C-4 by the cytochrome P450 monooxygenase TRI13, converting calonectrin to 3,15-diacetoxyspirpenol, which is subsequently acetylated by the acetyltransferase TRI7. A fourth hydroxyl group is added to C-8 by the cytochrome P450 monooxygenase TRI1, followed by the addition of an isovaleryl moiety by TRI16. Finally, the acetyl group is removed from the C-3 position by the trichothecene C-3 esterase TRI8 to produce T-2 toxin. This Fusarium sporotrichioides protein is Cytochrome P450 monooxygenase TRI13.